Reading from the N-terminus, the 407-residue chain is Arylacetamide deacetylase-like 4 family member 1 (407 aa).

Over 1–4 the chain is Cytoplasmic; that stretch reads MLYL. A helical; Signal-anchor for type II membrane protein transmembrane segment spans residues 5 to 25; the sequence is VGFLLATVCLLVLGVNVWVLI. Residues 26-407 lie on the Lumenal side of the membrane; it reads DHFLTIDVPP…NAVVSYIKDL (382 aa). The Involved in the stabilization of the negatively charged intermediate by the formation of the oxyanion hole motif lies at 119–121; the sequence is HGG. N-linked (GlcNAc...) asparagine glycosylation is present at Asn-168. Active-site residues include Ser-193, Asp-347, and His-377.

It belongs to the 'GDXG' lipolytic enzyme family.

Its subcellular location is the membrane. The polypeptide is Arylacetamide deacetylase-like 4 family member 1 (Mus musculus (Mouse)).